The sequence spans 764 residues: Palmitoyltransferase AKR1 (764 aa).

Disordered regions lie at residues 1–38 and 51–71; these read MVNELENVPRASTLTNEEQTVDPSNNDSQEDISLGDSN and SGNEEESGNEQVNHNDEAEED. The Cytoplasmic portion of the chain corresponds to 1–321; it reads MVNELENVPR…IKKWFKKSQH (321 aa). Over residues 10-27 the composition is skewed to polar residues; that stretch reads RASTLTNEEQTVDPSNND. A phosphoserine mark is found at Ser-51 and Ser-57. ANK repeat units follow at residues 72 to 102, 108 to 137, 142 to 171, 175 to 204, 213 to 242, and 246 to 275; these read PLLTRYHTACQRGDLATVKEMIHGKLLEVNN, EHITGLHWASINNRLSVVDFLVSQGADVNA, LHATPLHWAARYGYVYIVDFLLKHGADPTM, QGFNLLHLSVNSSNIMLVLYVLFNVVSKGL, KGRTSLLWAAYQGDSLTVAELLKFGASIKI, and EGFTPLHWGTVKGQPHVLKYLIQDGADFFQ. The chain crosses the membrane as a helical span at residues 322 to 341; it reads AKLVTFITPFLFLGIAFALF. At 342–346 the chain is on the lumenal side; it reads SHINP. Residues 347–364 form a helical membrane-spanning segment; the sequence is LFVIIVLFLLAIATNKGL. Residues 365-384 are Cytoplasmic-facing; that stretch reads NKFVLPSYGRMGVHNVTLLR. A helical membrane pass occupies residues 385–405; it reads SPLLSGVFFGTLLWVTIVWFF. Residues 406 to 418 are Lumenal-facing; sequence KVMPRTFSDEQYT. Residues 419–439 form a helical membrane-spanning segment; sequence NILMLVILVSVFYLFGQLVIM. Residues 440–513 are Cytoplasmic-facing; the sequence is DPGCLPEETD…FNDVGLKNHK (74 aa). In terms of domain architecture, DHHC spans 470–520; it reads NFCIETWIRKPLRSKFSPLNNAVVARFDHYCPWIFNDVGLKNHKAFIFFIT. The S-palmitoyl cysteine intermediate role is filled by Cys-500. Residues 514 to 534 form a helical membrane-spanning segment; sequence AFIFFITLMESGIFTFLALCL. The Lumenal segment spans residues 535–570; sequence EYFDELEDAHEDTSQKNGKCFILGASDLCSGLIYDR. The chain crosses the membrane as a helical span at residues 571–591; it reads FVFLILLWALLQSIWVASLIF. Over 592–764 the chain is Cytoplasmic; that stretch reads VQAFQICKGM…KDVEQGNDMV (173 aa).

Belongs to the DHHC palmitoyltransferase family. AKR/ZDHHC17 subfamily.

It localises to the early endosome membrane. It is found in the golgi apparatus membrane. It catalyses the reaction L-cysteinyl-[protein] + hexadecanoyl-CoA = S-hexadecanoyl-L-cysteinyl-[protein] + CoA. In terms of biological role, palmitoyltransferase specific for casein kinase 1. Palmitoylates isoforms YCK1 and YCK2 at both C-terminal cysteine residues, which is required for their proper plasma membrane localization. Required for constitutive endocytosis of a-factor receptor STE3 and both constitutive and pheromone-induced endocytosis of alpha-factor receptor STE2. The sequence is that of Palmitoyltransferase AKR1 (AKR1) from Saccharomyces cerevisiae (strain ATCC 204508 / S288c) (Baker's yeast).